The chain runs to 131 residues: UPF0102 protein CYA_0708 (131 aa).

Belongs to the UPF0102 family.

This Synechococcus sp. (strain JA-3-3Ab) (Cyanobacteria bacterium Yellowstone A-Prime) protein is UPF0102 protein CYA_0708.